A 517-amino-acid polypeptide reads, in one-letter code: Glucose-6-phosphate isomerase (517 aa).

Residue Glu345 is the Proton donor of the active site. Residues His376 and Lys490 contribute to the active site.

It belongs to the GPI family.

It localises to the cytoplasm. It catalyses the reaction alpha-D-glucose 6-phosphate = beta-D-fructose 6-phosphate. It participates in carbohydrate biosynthesis; gluconeogenesis. It functions in the pathway carbohydrate degradation; glycolysis; D-glyceraldehyde 3-phosphate and glycerone phosphate from D-glucose: step 2/4. Catalyzes the reversible isomerization of glucose-6-phosphate to fructose-6-phosphate. The chain is Glucose-6-phosphate isomerase from Erythrobacter litoralis (strain HTCC2594).